Here is a 308-residue protein sequence, read N- to C-terminus: Putative protein TIC 214 N-terminal part (308 aa).

6 consecutive transmembrane segments (helical) span residues 18–38, 64–84, 87–107, 124–144, 172–192, and 215–235; these read IINS…FSIG, FITG…HLAL, PHTI…WNNH, LSIQ…HFIL, VGWL…LSWI, and IFSI…PSPI. The span at 239-249 shows a compositional bias: basic and acidic residues; the sequence is KLKETSEMEER. A disordered region spans residues 239-308; it reads KLKETSEMEE…RDPSEWKGNI (70 aa). The segment covering 250-262 has biased composition (acidic residues); sequence GESEEETDVEIET. Residues 264 to 273 are compositionally biased toward basic and acidic residues; the sequence is SETKETKQEQ. Acidic residues predominate over residues 275-293; sequence GSTEEDPSLCSEEQEDPDK. The span at 294 to 308 shows a compositional bias: basic and acidic residues; it reads LDETGRDPSEWKGNI.

This sequence belongs to the TIC214 family. In terms of assembly, part of the Tic complex.

Its subcellular location is the plastid. It localises to the chloroplast inner membrane. Involved in protein precursor import into chloroplasts. May be part of an intermediate translocation complex acting as a protein-conducting channel at the inner envelope. In Piper cenocladum (Ant piper), this protein is Putative protein TIC 214 N-terminal part.